The primary structure comprises 21 residues: Bombinin-H4 (21 aa).

Position 2 is a D-allo-isoleucine (Ile-2). Ile-20 carries the isoleucine amide modification.

This sequence belongs to the bombinin family. Expressed by the skin glands.

It localises to the secreted. In terms of biological role, has antimicrobial and hemolytic activities. The protein is Bombinin-H4 of Bombina variegata (Yellow-bellied toad).